The chain runs to 1122 residues: Histone deacetylase 5 (1122 aa).

The disordered stretch occupies residues 1 to 24; it reads MNSPNESDGMSGREPSLEILPRTS. Residue Lys35 forms a Glycyl lysine isopeptide (Lys-Gly) (interchain with G-Cter in SUMO2) linkage. Disordered regions lie at residues 41 to 60 and 196 to 281; these read AMPSSMGGGGGGSPSPVELR and KEPT…SSPL. Residues 247–258 are compositionally biased toward basic and acidic residues; it reads DSRDDFPLRKTA. Ser259 carries the post-translational modification Phosphoserine; by AMPK, CaMK1, SIK1 and PKD/PRKD1. Over residues 272-281 the composition is skewed to basic and acidic residues; it reads KVAERRSSPL. Thr292 is modified (phosphothreonine; by PKC). Disordered regions lie at residues 302–343 and 481–504; these read GAGP…NIPT and MRTVGKLPRHRPLSRTQSSPLPQS. Residues 312–327 show a composition bias toward low complexity; that stretch reads NSAPGSGPSSPNSSHS. Positions 328–340 are enriched in polar residues; sequence TIAENGFTGSVPN. Over residues 494-504 the composition is skewed to low complexity; it reads SRTQSSPLPQS. A Phosphoserine; by AMPK, CaMK1, SIK1 and PKD/PRKD1 modification is found at Ser498. An N6-acetyllysine modification is found at Lys533. Residues 536-625 are disordered; the sequence is TKTGELPRQP…GPDLEEPGAG (90 aa). Over residues 581–621 the composition is skewed to acidic residues; it reads STQEDLEEEDEEDDGEEEEDCIQVKDEEGESGAEEGPDLEE. Phosphoserine is present on residues Ser611 and Ser661. Residues 684–1028 form a histone deacetylase region; the sequence is GVVYDTFMLK…VSALLSVELQ (345 aa). The Zn(2+) site is built by Cys696, Cys698, His704, and Cys781. The active site involves His833. The Nuclear export signal signature appears at 1081–1122; that stretch reads EEAETVSAMALLSVGAEQAQAAAAREHSPRPAEEPMEQEPAL. The tract at residues 1097 to 1122 is disordered; it reads EQAQAAAAREHSPRPAEEPMEQEPAL. Positions 1104–1113 are enriched in basic and acidic residues; sequence AREHSPRPAE. Residue Ser1108 is modified to Phosphoserine.

The protein belongs to the histone deacetylase family. HD type 2 subfamily. As to quaternary structure, interacts with AHRR, BAHD1, BCOR, HDAC7, HDAC9, CTBP1, MEF2C, NCOR2, NRIP1, PHB2 and a 14-3-3 chaperone protein. Interacts with BCL6, DDIT3/CHOP, GRK5, KDM5B and MYOCD. Interacts with EP300 in the presence of TFAP2C. Interacts with ANKRA2. Interacts with CUL7 (as part of the 3M complex); negatively regulated by ANKRA2. Interacts with ZBTB7B; the interaction allows the recruitment of HDAC4 on CD8 loci for deacetylation and possible inhibition of CD8 genes expression. Interacts with RARA. Phosphorylated by AMPK, CaMK1, SIK1 and PRKD1 at Ser-259 and Ser-498. The phosphorylation is required for the export to the cytoplasm and inhibition. Phosphorylated by the PKC kinases PKN1 and PKN2, impairing nuclear import. Phosphorylated by GRK5, leading to nuclear export of HDAC5 and allowing MEF2-mediated transcription. In terms of processing, ubiquitinated. Polyubiquitination however does not lead to its degradation. As to expression, ubiquitous.

It is found in the nucleus. It localises to the cytoplasm. The catalysed reaction is N(6)-acetyl-L-lysyl-[histone] + H2O = L-lysyl-[histone] + acetate. Functionally, responsible for the deacetylation of lysine residues on the N-terminal part of the core histones (H2A, H2B, H3 and H4). Histone deacetylation gives a tag for epigenetic repression and plays an important role in transcriptional regulation, cell cycle progression and developmental events. Histone deacetylases act via the formation of large multiprotein complexes. Involved in muscle maturation by repressing transcription of myocyte enhancer MEF2C. During muscle differentiation, it shuttles into the cytoplasm, allowing the expression of myocyte enhancer factors. Involved in the MTA1-mediated epigenetic regulation of ESR1 expression in breast cancer. Serves as a corepressor of RARA and causes its deacetylation. In association with RARA, plays a role in the repression of microRNA-10a and thereby in the inflammatory response. The polypeptide is Histone deacetylase 5 (HDAC5) (Homo sapiens (Human)).